The primary structure comprises 264 residues: NFAT activation molecule 1 (264 aa).

Residues 1 to 37 (MESWLLRRGARVRCLHPPSWLPAWCFLCLLPVPQTLQ) form the signal peptide. The Extracellular segment spans residues 38–159 (LTGLVSLTHT…QPPAFKVQEA (122 aa)). Residues 49–145 (LPIMVSLANT…QSDGVVILVR (97 aa)) enclose the Ig-like V-type domain. Residues cysteine 64 and cysteine 110 are joined by a disulfide bond. 2 N-linked (GlcNAc...) asparagine glycosylation sites follow: asparagine 105 and asparagine 118. A helical membrane pass occupies residues 160–180 (LMLGFTSLMSVLGVLGTALLL). The Cytoplasmic portion of the chain corresponds to 181–264 (WKKKQISVLG…NEFNLVYENL (84 aa)). Positions 212–232 (ESVYTSLQRRETEVYACMKEE) constitute an ITAM domain. Phosphotyrosine is present on residues tyrosine 215 and tyrosine 226.

In terms of assembly, no direct interaction with the B-cell antigen receptor (BCR). Interacts with SYK; probably involved in BCR signaling. Interacts with ZAP70. In terms of processing, N-glycosylated. In terms of tissue distribution, highly expressed in the spleen, expressed by both B- and CD4+ and CD8+ T-cells, as well as non-T- and non-B-cells, including macrophages and neutrophils. Expressed at low levels, if any, in non-immune tissue.

The protein resides in the cell membrane. In terms of biological role, may function in immune system as a receptor which activates via the calcineurin/NFAT-signaling pathway the downstream cytokine gene promoters. Activates the transcription of IL-13 and TNF-alpha promoters. May be involved in the regulation of B-cell, but not T-cell, development. The polypeptide is NFAT activation molecule 1 (Nfam1) (Mus musculus (Mouse)).